A 305-amino-acid polypeptide reads, in one-letter code: Peroxisome assembly protein 26 (305 aa).

Residues 1-25 (MKSDCSTSAAPFRGLGGPLRSSEPV) are disordered. At 1–246 (MKSDCSTSAA…RQLWDSAVSH (246 aa)) the chain is on the cytoplasmic side. A helical; Signal-anchor for type II membrane protein membrane pass occupies residues 247-267 (FFSLPFKKSLLAALILCLLVV). Residues 268–305 (RFDPASPSSLPSLYKLAQLFRWIRKAASSRLYQLRIRD) lie on the Peroxisomal matrix side of the membrane.

This sequence belongs to the peroxin-26 family. In terms of assembly, interacts (via its cytoplasmic domain) with PEX6; interaction is direct and is ATP-dependent. Interacts with PEX1; interaction is indirect and is mediated via interaction with PEX6.

It is found in the peroxisome membrane. Functionally, peroxisomal docking factor that anchors PEX1 and PEX6 to peroxisome membranes. PEX26 is therefore required for the formation of the PEX1-PEX6 AAA ATPase complex, a complex that mediates the extraction of the PEX5 receptor from peroxisomal membrane. The protein is Peroxisome assembly protein 26 (PEX26) of Macaca fascicularis (Crab-eating macaque).